Reading from the N-terminus, the 107-residue chain is Cysteine proteinase inhibitor (107 aa).

Positions 18–107 constitute a Cystatin domain; that stretch reads GGVQDAPAGR…KQLQEFKPAA (90 aa). The Secondary area of contact signature appears at 63-67; the sequence is QVVAG.

Belongs to the cystatin family. Phytocystatin subfamily. As to expression, expressed in embryos, developing endosperms, leaves, roots, flowers and pollen grains.

Functionally, inhibits papain, ficin, cathepsin B and, to a lesser extent, chymopapain, but is inactive against bromelain. Inhibits the growth of pathogenic fungi. Regulated by the DOF transcription factors SAD (activator) and BPBF (repressor). This is Cysteine proteinase inhibitor (ICY) from Hordeum vulgare (Barley).